Here is a 2169-residue protein sequence, read N- to C-terminus: Voltage-dependent L-type calcium channel subunit alpha-1C (2169 aa).

The Cytoplasmic segment spans residues 1 to 153; sequence MVPLVQPTTP…RACISIVEWK (153 aa). Positions 76 to 97 are calmodulin-binding; sequence GAALSWQAAIDAGRQAKLMGSA. Residues 98–108 show a composition bias toward polar residues; sequence GNTTISTVSST. The tract at residues 98–127 is disordered; sequence GNTTISTVSSTQRKRQQYGKPKKQSGTTAT. Residues 109-120 show a composition bias toward basic residues; that stretch reads QRKRQQYGKPKK. The I repeat unit spans residues 140–437; sequence NPIRRACISI…LVLGVLSGEF (298 aa). Residues 154–172 traverse the membrane as a helical segment; it reads PFEIIILLTIFANCVALAI. Residues 173 to 187 lie on the Extracellular side of the membrane; the sequence is YIPFPEDDSNATNSN. The N-linked (GlcNAc...) asparagine glycan is linked to N182. The chain crosses the membrane as a helical span at residues 188–208; it reads LERVEYLFLIIFTVEAFLKVI. Residues 209–217 lie on the Cytoplasmic side of the membrane; that stretch reads AYGLLFHPN. A helical transmembrane segment spans residues 218-238; sequence AYLRNGWNLLDFIIVVVGLFS. The Extracellular portion of the chain corresponds to 239–261; that stretch reads AILEQATKADGANALGGKGAGFD. A helical membrane pass occupies residues 262-280; it reads VKALRAFRVLRPLRLVSGV. Over 281-297 the chain is Cytoplasmic; the sequence is PSLQVVLNSIIKAMVPL. The chain crosses the membrane as a helical span at residues 298-319; the sequence is LHTALLVLFVIIIYAIIGLELF. Topologically, residues 320 to 379 are extracellular; it reads MGKMHKTCYNQEGITDVPAEEDPSPCALESGHGRQCQNGTVCKPGWDGPKHGITNFDNFA. C345 and C361 form a disulfide bridge. N357 carries N-linked (GlcNAc...) asparagine glycosylation. The segment at residues 380–401 is an intramembrane region (pore-forming); sequence FAMLTVFQCITMEGWTDVLYWM. The Selectivity filter of repeat I signature appears at 390-393; sequence TMEG. E392 is a binding site for Ca(2+). Topologically, residues 402–409 are extracellular; that stretch reads QDAMGYEL. A helical transmembrane segment spans residues 410–430; the sequence is PWVYFVSLVIFGSFFVLNLVL. Residues 431 to 553 lie on the Cytoplasmic side of the membrane; sequence GVLSGEFSKE…RKCRAAVKSN (123 aa). Residues 457 to 474 form an AID/alpha-interaction domain; mediates interaction with the beta subunit region; the sequence is QQLEEDLKGYLDWITQAE. The segment at 478–510 is disordered; it reads PENEDEGVDEEKPRNMSMPTSETESVNTENVAG. The span at 494 to 507 shows a compositional bias: polar residues; that stretch reads SMPTSETESVNTEN. S498 is subject to Phosphoserine. T505 bears the Phosphothreonine mark. The stretch at 539–785 is one II repeat; it reads NRFCRRKCRA…VFLAIAVDNL (247 aa). The chain crosses the membrane as a helical span at residues 554 to 572; that stretch reads VFYWLVIFLVFLNTLTIAS. Over 573–583 the chain is Extracellular; that stretch reads EHYNQPHWLTE. A helical membrane pass occupies residues 584-604; the sequence is VQDTANKALLALFTAEMLLKM. Residues 605–615 lie on the Cytoplasmic side of the membrane; it reads YSLGLQAYFVS. Residues 616–635 traverse the membrane as a helical segment; sequence LFNRLDCFIVCGGILETILV. Residues 636–644 are Extracellular-facing; the sequence is ETKIMSPLG. The helical transmembrane segment at 645-663 threads the bilayer; it reads ISVLRCVRLLRIFKITRYW. Over 664–682 the chain is Cytoplasmic; sequence NSLSNLVASLLNSVRSIAS. A helical membrane pass occupies residues 683–702; sequence LLLLLFLFIIIFSLLGMQLF. Topologically, residues 703 to 722 are extracellular; it reads GGKFNFDEMRTRRSTFDNFP. The segment at residues 723-744 is an intramembrane region (pore-forming); that stretch reads QSLLTVFQILTGEDWNSVMYDG. A Selectivity filter of repeat II motif is present at residues 733 to 736; the sequence is TGED. Position 735 (E735) interacts with Ca(2+). The Extracellular segment spans residues 745 to 754; it reads IMAYGGPSFP. Residues 755-774 traverse the membrane as a helical segment; that stretch reads GMLVCIYFIILFICGNYILL. Topologically, residues 775–929 are cytoplasmic; that stretch reads NVFLAIAVDN…LQCHRIVNDT (155 aa). The disordered stretch occupies residues 793–890; the sequence is SAQKEEEEEK…EMPVGPRPRP (98 aa). Over residues 812–835 the composition is skewed to basic and acidic residues; it reads SPEKKQEVVEKPAVEETKEEKIEL. Residues S837 and S844 each carry the phosphoserine modification. The interval 858-905 is interaction with STAC2; it reads NENEDKSPYPNPDAAGEEDEEEPEMPVGPRPRPLSELHLKEKAVPMPE. Positions 872 to 881 are enriched in acidic residues; sequence AGEEDEEEPE. The stretch at 916 to 1198 is one III repeat; the sequence is NRFRLQCHRI…IFVGFVIVTF (283 aa). Residues 930–948 form a helical membrane-spanning segment; it reads IFTNLILFFILLSSISLAA. Residues 949–960 are Extracellular-facing; sequence EDPVQHTSFRNH. The chain crosses the membrane as a helical span at residues 961 to 980; it reads ILFYFDIVFTTIFTIEIALK. At 981 to 996 the chain is on the cytoplasmic side; it reads MTAYGAFLHKGSFCRN. A helical transmembrane segment spans residues 997–1015; the sequence is YFNILDLLVVSVSLISFGI. Over 1016–1022 the chain is Extracellular; the sequence is QSSAINV. The chain crosses the membrane as a helical span at residues 1023-1041; that stretch reads VKILRVLRVLRPLRAINRA. The Cytoplasmic segment spans residues 1042–1060; that stretch reads KGLKHVVQCVFVAIRTIGN. A helical transmembrane segment spans residues 1061–1080; the sequence is IVIVTTLLQFMFACIGVQLF. At 1081 to 1130 the chain is on the extracellular side; it reads KGKLYTCSDSSKQTEAECKGNYITYKDGEVDQPIIQPRSWENSKFDFDNV. C1087 and C1098 form a disulfide bridge. The tract at residues 1118–1207 is dihydropyridine binding; that stretch reads RSWENSKFDF…FQEQGEQEYK (90 aa). An intramembrane region (pore-forming) is located at residues 1131-1151; the sequence is LAAMMALFTVSTFEGWPELLY. Residues 1142 to 1145 carry the Selectivity filter of repeat III motif; it reads TFEG. Position 1144 (E1144) interacts with Ca(2+). The Extracellular segment spans residues 1152–1168; it reads RSIDSHTEDKGPIYNYR. Residues 1169-1190 form a helical membrane-spanning segment; the sequence is VEISIFFIIYIIIIAFFMMNIF. Topologically, residues 1191–1248 are cytoplasmic; the sequence is VGFVIVTFQEQGEQEYKNCELDKNQRQCVEYALKARPLRRYIPKNQHQYKVWYVVNST. An IV repeat occupies 1235–1508; it reads NQHQYKVWYV…LFVAVVMDNF (274 aa). Residues 1249–1270 traverse the membrane as a helical segment; that stretch reads YFEYLMFVLILLNTICLAMQHY. The Extracellular segment spans residues 1271 to 1278; sequence GQSCLFKI. A helical transmembrane segment spans residues 1279–1300; the sequence is AMNILNMLFTGLFTVEMILKLI. Residues 1301–1310 lie on the Cytoplasmic side of the membrane; sequence AFKPKHYFCD. A helical transmembrane segment spans residues 1311-1330; it reads AWNTFDALIVVGSIVDIAIT. The Extracellular portion of the chain corresponds to 1331 to 1353; the sequence is EVNPAEHTQCSPSMNAEENSRIS. Residues 1354–1372 traverse the membrane as a helical segment; the sequence is ITFFRLFRVMRLVKLLSRG. The Cytoplasmic segment spans residues 1373–1390; sequence EGIRTLLWTFIKSFQALP. A helical transmembrane segment spans residues 1391–1411; that stretch reads YVALLIVMLFFIYAVIGMQVF. Residues 1412–1433 are Extracellular-facing; that stretch reads GKIALNDTTEINRNNNFQTFPQ. N1417 carries an N-linked (GlcNAc...) asparagine glycan. An intramembrane region (pore-forming) is located at residues 1434 to 1452; it reads AVLLLFRCATGEAWQDIML. Positions 1443–1446 match the Selectivity filter of repeat IV motif; it reads TGEA. Topologically, residues 1453–1480 are extracellular; the sequence is ACMPGKKCAPESDPSNSTEGETPCGSSF. Positions 1459–1527 are dihydropyridine binding; sequence KCAPESDPSN…LGPHHLDEFK (69 aa). An intrachain disulfide couples C1460 to C1476. An N-linked (GlcNAc...) asparagine glycan is attached at N1468. The tract at residues 1473-1515 is phenylalkylamine binding; it reads ETPCGSSFAVFYFISFYMLCAFLIINLFVAVVMDNFDYLTRDW. The chain crosses the membrane as a helical span at residues 1481–1505; the sequence is AVFYFISFYMLCAFLIINLFVAVVM. Residues 1506 to 2169 lie on the Cytoplasmic side of the membrane; sequence DNFDYLTRDW…ADSRVHVRSL (664 aa). The segment at 1640–1667 is important for interaction with STAC1, STAC2 and STAC3; that stretch reads DEVTVGKFYATFLIQEYFRKFKKRKEQG. Residues 1646 to 1666 are calmodulin-binding IQ region; the sequence is KFYATFLIQEYFRKFKKRKEQ. The tract at residues 1680 to 1699 is important for localization in at the junctional membrane; the sequence is LQAGLRTLHDIGPEIRRAIS. Residues S1699 and S1720 each carry the phosphoserine modification. 2 disordered regions span residues 1761 to 1793 and 1894 to 1920; these read KAGNNQGDTESPSHEKLVDSTFTPSSYSSTGSN and ENRQLTPPEEDKGDTRPSPKKGFLRSA. Positions 1780-1792 are enriched in polar residues; sequence STFTPSSYSSTGS. The span at 1894 to 1910 shows a compositional bias: basic and acidic residues; sequence ENRQLTPPEEDKGDTRP. S1927 is subject to Phosphoserine.

It belongs to the calcium channel alpha-1 subunit (TC 1.A.1.11) family. CACNA1C subfamily. As to quaternary structure, component of a calcium channel complex consisting of a pore-forming alpha subunit (CACNA1C) and ancillary beta, gamma and delta subunits. The channel complex contains alpha, beta, gamma and delta subunits in a 1:1:1:1 ratio, i.e. it contains only one of each type of subunit. CACNA1C channel activity is modulated by ancillary subunits, such as CACNB1, CACNB2, CACNB3, CACNA2D1 and CACNA2D4. Interacts with CACNB1. Interacts with CACNB2. Identified in a complex with CACNA2D4 and CACNB3. Interacts with CACNB3. Interacts with CACNA2D1. Interacts with CACNA2D4. Interacts with the gamma subunits CACNG4, CACNG6, CACNG7 and CACNG8. Interacts with CALM1. Interacts (via the N-terminus and the C-terminal C and IQ motifs) with CABP1; this inhibits Ca(2+)-dependent channel inactivation. The binding via the C motif is calcium independent whereas the binding via IQ requires the presence of calcium and is mutually exclusive with calmodulin binding. The binding to the cytoplasmic N-terminal domain is calcium independent but is essential for the channel modulation. Interacts (via C-terminal CDB motif) with CABP5; in a calcium-dependent manner. Interacts with CIB1; the interaction increases upon cardiomyocytes hypertrophy. Interacts with STAC2 and STAC3; this inhibits channel inactivation. Post-translationally, phosphorylation by PKA at Ser-1927 activates the channel. Elevated levels of blood glucose lead to increased phosphorylation by PKA. As to expression, expressed in heart. Expressed in uterus.

Its subcellular location is the cell membrane. The protein localises to the sarcolemma. It is found in the perikaryon. It localises to the postsynaptic density membrane. The protein resides in the cell projection. Its subcellular location is the dendrite. The protein localises to the T-tubule. The catalysed reaction is Ca(2+)(in) = Ca(2+)(out). Inhibited by dihydropyridines (DHP), such as isradipine. Inhibited by nifedipine. Channel activity is regulated by Ca(2+) and calmodulin. Binding of STAC1, STAC2 or STAC3 to a region that overlaps with the calmodulin binding site inhibits channel inactivation by Ca(2+) and calmodulin. Binding of calmodulin or CABP1 at the same regulatory sites results in opposite effects on the channel function. Shear stress and pressure increases calcium channel activity. Its function is as follows. Pore-forming, alpha-1C subunit of the voltage-gated calcium channel that gives rise to L-type calcium currents. Mediates influx of calcium ions into the cytoplasm, and thereby triggers calcium release from the sarcoplasm. Plays an important role in excitation-contraction coupling in the heart. Required for normal heart development and normal regulation of heart rhythm. Required for normal contraction of smooth muscle cells in blood vessels and in the intestine. Essential for normal blood pressure regulation via its role in the contraction of arterial smooth muscle cells. Long-lasting (L-type) calcium channels belong to the 'high-voltage activated' (HVA) group. The polypeptide is Voltage-dependent L-type calcium channel subunit alpha-1C (CACNA1C) (Cavia porcellus (Guinea pig)).